Consider the following 221-residue polypeptide: UPF0758 protein KPN78578_39390 (221 aa).

Residues 99–221 form the MPN domain; the sequence is ALVTPSMTRE…YVSFAERGWI (123 aa). Residues histidine 170, histidine 172, and aspartate 183 each coordinate Zn(2+). The JAMM motif signature appears at 170-183; that stretch reads HNHPSGSPEPSQAD.

It belongs to the UPF0758 family. YicR subfamily.

This Klebsiella pneumoniae subsp. pneumoniae (strain ATCC 700721 / MGH 78578) protein is UPF0758 protein KPN78578_39390.